A 266-amino-acid chain; its full sequence is ATP synthase subunit a (266 aa).

7 helical membrane passes run 28–48 (ISFT…AIFM), 90–110 (LIFT…VPLF), 125–145 (VTVT…VGFT), 158–178 (HGTP…SFIL), 187–207 (LFVA…FIVN), 216–236 (AFLA…MIGI), and 239–259 (LEFL…SLYL).

The protein belongs to the ATPase A chain family. In terms of assembly, F-type ATPases have 2 components, CF(1) - the catalytic core - and CF(0) - the membrane proton channel. CF(1) has five subunits: alpha(3), beta(3), gamma(1), delta(1), epsilon(1). CF(0) has three main subunits: a(1), b(2) and c(9-12). The alpha and beta chains form an alternating ring which encloses part of the gamma chain. CF(1) is attached to CF(0) by a central stalk formed by the gamma and epsilon chains, while a peripheral stalk is formed by the delta and b chains.

The protein localises to the cell inner membrane. In terms of biological role, key component of the proton channel; it plays a direct role in the translocation of protons across the membrane. The polypeptide is ATP synthase subunit a (Zymomonas mobilis subsp. mobilis (strain ATCC 31821 / ZM4 / CP4)).